The following is a 699-amino-acid chain: Polyribonucleotide nucleotidyltransferase (699 aa).

Mg(2+) is bound by residues D485 and D491. The 60-residue stretch at 552–611 (PRITTIKINPEKIRDVIGKGGAVIRALTEETGTTIELEDDGTVKIASSNGEATKEAIRRI) folds into the KH domain. An S1 motif domain is found at 621–689 (GRIYNGKVIR…RQGRVRLSIK (69 aa)).

The protein belongs to the polyribonucleotide nucleotidyltransferase family. In terms of assembly, component of the RNA degradosome, which is a multiprotein complex involved in RNA processing and mRNA degradation. Mg(2+) is required as a cofactor.

The protein resides in the cytoplasm. It carries out the reaction RNA(n+1) + phosphate = RNA(n) + a ribonucleoside 5'-diphosphate. Functionally, involved in mRNA degradation. Catalyzes the phosphorolysis of single-stranded polyribonucleotides processively in the 3'- to 5'-direction. This Shewanella sp. (strain MR-7) protein is Polyribonucleotide nucleotidyltransferase.